We begin with the raw amino-acid sequence, 449 residues long: UDP-N-acetylmuramoylalanine--D-glutamate ligase (449 aa).

An ATP-binding site is contributed by 111 to 117; that stretch reads GTNGKST.

The protein belongs to the MurCDEF family.

It localises to the cytoplasm. It carries out the reaction UDP-N-acetyl-alpha-D-muramoyl-L-alanine + D-glutamate + ATP = UDP-N-acetyl-alpha-D-muramoyl-L-alanyl-D-glutamate + ADP + phosphate + H(+). It participates in cell wall biogenesis; peptidoglycan biosynthesis. Cell wall formation. Catalyzes the addition of glutamate to the nucleotide precursor UDP-N-acetylmuramoyl-L-alanine (UMA). In Rickettsia felis (strain ATCC VR-1525 / URRWXCal2) (Rickettsia azadi), this protein is UDP-N-acetylmuramoylalanine--D-glutamate ligase.